Consider the following 1225-residue polypeptide: ATP-dependent helicase/nuclease subunit A (1225 aa).

One can recognise a UvrD-like helicase ATP-binding domain in the interval 11–478 (AQWTDAQWKS…IDLSKNFRSR (468 aa)). 32-39 (AAAGSGKT) contacts ATP. Positions 479–790 (KEVLATTNYL…RMMTVHSSKG (312 aa)) constitute a UvrD-like helicase C-terminal domain. Residues 999–1014 (EKPSKQSVSELKRQLE) show a composition bias toward basic and acidic residues. The interval 999–1018 (EKPSKQSVSELKRQLETEES) is disordered.

The protein belongs to the helicase family. AddA subfamily. Heterodimer of AddA and AddB/RexB. Mg(2+) serves as cofactor.

The enzyme catalyses Couples ATP hydrolysis with the unwinding of duplex DNA by translocating in the 3'-5' direction.. It carries out the reaction ATP + H2O = ADP + phosphate + H(+). In terms of biological role, the heterodimer acts as both an ATP-dependent DNA helicase and an ATP-dependent, dual-direction single-stranded exonuclease. Recognizes the chi site generating a DNA molecule suitable for the initiation of homologous recombination. The AddA nuclease domain is required for chi fragment generation; this subunit has the helicase and 3' -&gt; 5' nuclease activities. This is ATP-dependent helicase/nuclease subunit A from Staphylococcus haemolyticus (strain JCSC1435).